Here is a 388-residue protein sequence, read N- to C-terminus: Succinate--CoA ligase [ADP-forming] subunit beta (388 aa).

The ATP-grasp domain occupies 9–244 (KQLFAEYGLP…PSQDDPREAH (236 aa)). Residues lysine 46, 53 to 55 (GRG), glutamate 99, threonine 102, and glutamate 107 contribute to the ATP site. Residues asparagine 199 and aspartate 213 each coordinate Mg(2+). Residues asparagine 264 and 321–323 (GIV) contribute to the substrate site.

This sequence belongs to the succinate/malate CoA ligase beta subunit family. In terms of assembly, heterotetramer of two alpha and two beta subunits. It depends on Mg(2+) as a cofactor.

It carries out the reaction succinate + ATP + CoA = succinyl-CoA + ADP + phosphate. The enzyme catalyses GTP + succinate + CoA = succinyl-CoA + GDP + phosphate. Its pathway is carbohydrate metabolism; tricarboxylic acid cycle; succinate from succinyl-CoA (ligase route): step 1/1. Functionally, succinyl-CoA synthetase functions in the citric acid cycle (TCA), coupling the hydrolysis of succinyl-CoA to the synthesis of either ATP or GTP and thus represents the only step of substrate-level phosphorylation in the TCA. The beta subunit provides nucleotide specificity of the enzyme and binds the substrate succinate, while the binding sites for coenzyme A and phosphate are found in the alpha subunit. The polypeptide is Succinate--CoA ligase [ADP-forming] subunit beta (Pseudomonas putida (strain GB-1)).